The following is a 414-amino-acid chain: V-set and immunoglobulin domain-containing protein 8 (414 aa).

The signal sequence occupies residues 1–21; the sequence is MRVGGAFHLLLVCLSPALLSA. Ig-like V-type domains lie at 22–141 and 146–257; these read VRIN…VIVT and PAVP…VKVS. Residues 22–263 are Extracellular-facing; sequence VRINGDGQEV…VKVSDSRRIG (242 aa). 2 cysteine pairs are disulfide-bonded: cysteine 44/cysteine 126 and cysteine 167/cysteine 239. The helical transmembrane segment at 264–284 threads the bilayer; sequence VIIGIVLGSLLALGCLAVGIW. At 285 to 414 the chain is on the cytoplasmic side; it reads GLVCCCCGGS…PVQCKNGLLV (130 aa).

The protein resides in the membrane. The polypeptide is V-set and immunoglobulin domain-containing protein 8 (Homo sapiens (Human)).